The following is a 671-amino-acid chain: DNA ligase (671 aa).

NAD(+) contacts are provided by residues 32–36 (DAEYD), 81–82 (SL), and Glu-113. The active-site N6-AMP-lysine intermediate is the Lys-115. NAD(+) is bound by residues Arg-136, Glu-173, Lys-290, and Lys-314. 4 residues coordinate Zn(2+): Cys-408, Cys-411, Cys-426, and Cys-432. Residues 593–671 (EIDSPFAGKT…EAEMIRLLGA (79 aa)) enclose the BRCT domain.

This sequence belongs to the NAD-dependent DNA ligase family. LigA subfamily. Requires Mg(2+) as cofactor. It depends on Mn(2+) as a cofactor.

It carries out the reaction NAD(+) + (deoxyribonucleotide)n-3'-hydroxyl + 5'-phospho-(deoxyribonucleotide)m = (deoxyribonucleotide)n+m + AMP + beta-nicotinamide D-nucleotide.. Its function is as follows. DNA ligase that catalyzes the formation of phosphodiester linkages between 5'-phosphoryl and 3'-hydroxyl groups in double-stranded DNA using NAD as a coenzyme and as the energy source for the reaction. It is essential for DNA replication and repair of damaged DNA. This Salmonella paratyphi B (strain ATCC BAA-1250 / SPB7) protein is DNA ligase.